The following is a 59-amino-acid chain: Membrane-associated ATPase epsilon chain (59 aa).

To E.hirae NtpH. In terms of assembly, sul-ATPase is composed of six (or maybe five) subunits: alpha, beta, delta, gamma, C (proteolipid), and possibly epsilon.

It carries out the reaction ATP + H2O + 4 H(+)(in) = ADP + phosphate + 5 H(+)(out). The protein is Membrane-associated ATPase epsilon chain (atpE) of Sulfurisphaera tokodaii (strain DSM 16993 / JCM 10545 / NBRC 100140 / 7) (Sulfolobus tokodaii).